The chain runs to 186 residues: Threonylcarbamoyl-AMP synthase (186 aa).

Positions 3–186 constitute a YrdC-like domain; it reads ILSLSECVDR…IINGSLIRHG (184 aa).

It belongs to the SUA5 family. TsaC subfamily.

Its subcellular location is the cytoplasm. The enzyme catalyses L-threonine + hydrogencarbonate + ATP = L-threonylcarbamoyladenylate + diphosphate + H2O. In terms of biological role, required for the formation of a threonylcarbamoyl group on adenosine at position 37 (t(6)A37) in tRNAs that read codons beginning with adenine. Catalyzes the conversion of L-threonine, HCO(3)(-)/CO(2) and ATP to give threonylcarbamoyl-AMP (TC-AMP) as the acyladenylate intermediate, with the release of diphosphate. In Buchnera aphidicola subsp. Baizongia pistaciae (strain Bp), this protein is Threonylcarbamoyl-AMP synthase.